The chain runs to 775 residues: 1,4-alpha-glucan branching enzyme GlgB (775 aa).

The Nucleophile role is filled by Asp-431. Residue Glu-484 is the Proton donor of the active site.

This sequence belongs to the glycosyl hydrolase 13 family. GlgB subfamily. Monomer.

The catalysed reaction is Transfers a segment of a (1-&gt;4)-alpha-D-glucan chain to a primary hydroxy group in a similar glucan chain.. The protein operates within glycan biosynthesis; glycogen biosynthesis. Its function is as follows. Catalyzes the formation of the alpha-1,6-glucosidic linkages in glycogen by scission of a 1,4-alpha-linked oligosaccharide from growing alpha-1,4-glucan chains and the subsequent attachment of the oligosaccharide to the alpha-1,6 position. In Parasynechococcus marenigrum (strain WH8102), this protein is 1,4-alpha-glucan branching enzyme GlgB.